The sequence spans 152 residues: SsrA-binding protein (152 aa).

The segment covering 132 to 142 has biased composition (basic and acidic residues); it reads REAIKKRDVSD. Residues 132–152 form a disordered region; sequence REAIKKRDVSDQIRSSLRRSR.

It belongs to the SmpB family.

Its subcellular location is the cytoplasm. In terms of biological role, required for rescue of stalled ribosomes mediated by trans-translation. Binds to transfer-messenger RNA (tmRNA), required for stable association of tmRNA with ribosomes. tmRNA and SmpB together mimic tRNA shape, replacing the anticodon stem-loop with SmpB. tmRNA is encoded by the ssrA gene; the 2 termini fold to resemble tRNA(Ala) and it encodes a 'tag peptide', a short internal open reading frame. During trans-translation Ala-aminoacylated tmRNA acts like a tRNA, entering the A-site of stalled ribosomes, displacing the stalled mRNA. The ribosome then switches to translate the ORF on the tmRNA; the nascent peptide is terminated with the 'tag peptide' encoded by the tmRNA and targeted for degradation. The ribosome is freed to recommence translation, which seems to be the essential function of trans-translation. The sequence is that of SsrA-binding protein from Bdellovibrio bacteriovorus (strain ATCC 15356 / DSM 50701 / NCIMB 9529 / HD100).